The primary structure comprises 389 residues: Galactokinase (389 aa).

33-36 is a substrate binding site; that stretch reads EHTD. Residues S67 and 124 to 130 contribute to the ATP site; that span reads GAGLSSS. Mg(2+) is bound by residues S130 and E162. D174 acts as the Proton acceptor in catalysis. Residue Y224 participates in substrate binding.

The protein belongs to the GHMP kinase family. GalK subfamily.

The protein localises to the cytoplasm. The enzyme catalyses alpha-D-galactose + ATP = alpha-D-galactose 1-phosphate + ADP + H(+). The protein operates within carbohydrate metabolism; galactose metabolism. Its function is as follows. Catalyzes the transfer of the gamma-phosphate of ATP to D-galactose to form alpha-D-galactose-1-phosphate (Gal-1-P). In Fusobacterium nucleatum subsp. nucleatum (strain ATCC 25586 / DSM 15643 / BCRC 10681 / CIP 101130 / JCM 8532 / KCTC 2640 / LMG 13131 / VPI 4355), this protein is Galactokinase.